We begin with the raw amino-acid sequence, 404 residues long: S-adenosylmethionine synthase (404 aa).

Position 17 (H17) interacts with ATP. D19 is a binding site for Mg(2+). E45 contacts K(+). Positions 58 and 101 each coordinate L-methionine. Residues 101-111 (QSPDIAMGVDQ) are flexible loop. ATP contacts are provided by residues 177–179 (DGK), 244–245 (RF), D253, 259–260 (RK), A276, and K280. D253 is a binding site for L-methionine. Residue K284 participates in L-methionine binding.

It belongs to the AdoMet synthase family. In terms of assembly, homotetramer; dimer of dimers. Mg(2+) is required as a cofactor. It depends on K(+) as a cofactor.

It localises to the cytoplasm. The catalysed reaction is L-methionine + ATP + H2O = S-adenosyl-L-methionine + phosphate + diphosphate. The protein operates within amino-acid biosynthesis; S-adenosyl-L-methionine biosynthesis; S-adenosyl-L-methionine from L-methionine: step 1/1. Its function is as follows. Catalyzes the formation of S-adenosylmethionine (AdoMet) from methionine and ATP. The overall synthetic reaction is composed of two sequential steps, AdoMet formation and the subsequent tripolyphosphate hydrolysis which occurs prior to release of AdoMet from the enzyme. This Geobacillus thermodenitrificans (strain NG80-2) protein is S-adenosylmethionine synthase.